The following is a 314-amino-acid chain: Curved DNA-binding protein (314 aa).

Residues 5 to 69 enclose the J domain; sequence DYYKILDVEP…EKRAEYDELR (65 aa). A disordered region spans residues 73–92; the sequence is RQGRPFQTPPGWQSRAGAGA.

The protein localises to the cytoplasm. Its subcellular location is the nucleoid. Its function is as follows. DNA-binding protein that preferentially recognizes a curved DNA sequence. It is probably a functional analog of DnaJ; displays overlapping activities with DnaJ, but functions under different conditions, probably acting as a molecular chaperone in an adaptive response to environmental stresses other than heat shock. Lacks autonomous chaperone activity; binds native substrates and targets them for recognition by DnaK. Its activity is inhibited by the binding of CbpM. This is Curved DNA-binding protein from Pseudomonas syringae pv. tomato (strain ATCC BAA-871 / DC3000).